The chain runs to 144 residues: Nucleoside diphosphate kinase (144 aa).

Residues Lys9, Phe57, Arg85, Thr91, Arg102, and Asn112 each coordinate ATP. Residue His115 is the Pros-phosphohistidine intermediate of the active site.

Belongs to the NDK family. Homotetramer. It depends on Mg(2+) as a cofactor.

It is found in the cytoplasm. The enzyme catalyses a 2'-deoxyribonucleoside 5'-diphosphate + ATP = a 2'-deoxyribonucleoside 5'-triphosphate + ADP. It carries out the reaction a ribonucleoside 5'-diphosphate + ATP = a ribonucleoside 5'-triphosphate + ADP. In terms of biological role, major role in the synthesis of nucleoside triphosphates other than ATP. The ATP gamma phosphate is transferred to the NDP beta phosphate via a ping-pong mechanism, using a phosphorylated active-site intermediate. The sequence is that of Nucleoside diphosphate kinase from Chlamydia pneumoniae (Chlamydophila pneumoniae).